The following is a 402-amino-acid chain: Homoserine O-acetyltransferase (402 aa).

Over residues 1–17 the composition is skewed to polar residues; sequence MDWQTTSADTAPSSFIT. A disordered region spans residues 1 to 39; that stretch reads MDWQTTSADTAPSSFITEEQDRSLFGKPPASGAWKESDP. The region spanning 78–388 is the AB hydrolase-1 domain; the sequence is NAVLVLHALT…HFGHDGFLIE (311 aa). The Nucleophile role is filled by Ser183. Arg255 serves as a coordination point for substrate. Residues Asp349 and His382 contribute to the active site. Residue Asp383 participates in substrate binding.

This sequence belongs to the AB hydrolase superfamily. MetX family. Homodimer.

It is found in the cytoplasm. The enzyme catalyses L-homoserine + acetyl-CoA = O-acetyl-L-homoserine + CoA. The protein operates within amino-acid biosynthesis; L-methionine biosynthesis via de novo pathway; O-acetyl-L-homoserine from L-homoserine: step 1/1. Its function is as follows. Transfers an acetyl group from acetyl-CoA to L-homoserine, forming acetyl-L-homoserine. The protein is Homoserine O-acetyltransferase of Leifsonia xyli subsp. xyli (strain CTCB07).